Here is a 217-residue protein sequence, read N- to C-terminus: Large ribosomal subunit protein uL1 (217 aa).

Phosphotyrosine is present on Y11. K91 and K106 each carry N6-acetyllysine. At K118 the chain carries N6-acetyllysine; alternate. Residue K118 forms a Glycyl lysine isopeptide (Lys-Gly) (interchain with G-Cter in SUMO1); alternate linkage. A Glycyl lysine isopeptide (Lys-Gly) (interchain with G-Cter in SUMO2); alternate cross-link involves residue K118. Residue K161 forms a Glycyl lysine isopeptide (Lys-Gly) (interchain with G-Cter in SUMO2) linkage.

It belongs to the universal ribosomal protein uL1 family. As to quaternary structure, component of the large ribosomal subunit.

It is found in the cytoplasm. Component of the large ribosomal subunit. The ribosome is a large ribonucleoprotein complex responsible for the synthesis of proteins in the cell. The chain is Large ribosomal subunit protein uL1 (RPL10A) from Oryctolagus cuniculus (Rabbit).